The following is a 352-amino-acid chain: Photosystem II D2 protein (352 aa).

The chain crosses the membrane as a helical span at residues 40–60 (CAYLALGGWLTGTTFVTSWYT). His117 is a chlorophyll a binding site. A helical transmembrane segment spans residues 124-140 (GFMLRQFEIARLVGVRP). Pheophytin a-binding residues include Gln129 and Asn142. A helical transmembrane segment spans residues 152–165 (VFVSVFLIYPLGQS). His197 is a binding site for chlorophyll a. A helical membrane pass occupies residues 207–227 (GALLCAIHGATVENTLYKDGE). Positions 214 and 261 each coordinate a plastoquinone. His214 serves as a coordination point for Fe cation. A Fe cation-binding site is contributed by His268. Residues 278–294 (GLWMSSIGVVGLALNLR) traverse the membrane as a helical segment.

It belongs to the reaction center PufL/M/PsbA/D family. As to quaternary structure, PSII is composed of 1 copy each of membrane proteins PsbA, PsbB, PsbC, PsbD, PsbE, PsbF, PsbH, PsbI, PsbJ, PsbK, PsbL, PsbM, PsbT, PsbX, PsbY, PsbZ, Psb30/Ycf12, peripheral proteins PsbO, CyanoQ (PsbQ), PsbU, PsbV and a large number of cofactors. It forms dimeric complexes. The cofactor is The D1/D2 heterodimer binds P680, chlorophylls that are the primary electron donor of PSII, and subsequent electron acceptors. It shares a non-heme iron and each subunit binds pheophytin, quinone, additional chlorophylls, carotenoids and lipids. There is also a Cl(-1) ion associated with D1 and D2, which is required for oxygen evolution. The PSII complex binds additional chlorophylls, carotenoids and specific lipids..

It is found in the cellular thylakoid membrane. The catalysed reaction is 2 a plastoquinone + 4 hnu + 2 H2O = 2 a plastoquinol + O2. Its function is as follows. Photosystem II (PSII) is a light-driven water:plastoquinone oxidoreductase that uses light energy to abstract electrons from H(2)O, generating O(2) and a proton gradient subsequently used for ATP formation. It consists of a core antenna complex that captures photons, and an electron transfer chain that converts photonic excitation into a charge separation. The D1/D2 (PsbA/PsbD) reaction center heterodimer binds P680, the primary electron donor of PSII as well as several subsequent electron acceptors. D2 is needed for assembly of a stable PSII complex. The polypeptide is Photosystem II D2 protein (Synechococcus sp. (strain JA-3-3Ab) (Cyanobacteria bacterium Yellowstone A-Prime)).